We begin with the raw amino-acid sequence, 130 residues long: Small ribosomal subunit protein uS8 (130 aa).

This sequence belongs to the universal ribosomal protein uS8 family. As to quaternary structure, part of the 30S ribosomal subunit. Contacts proteins S5 and S12.

Functionally, one of the primary rRNA binding proteins, it binds directly to 16S rRNA central domain where it helps coordinate assembly of the platform of the 30S subunit. This chain is Small ribosomal subunit protein uS8, found in Phytoplasma australiense.